Consider the following 371-residue polypeptide: Queuine tRNA-ribosyltransferase (371 aa).

D89 functions as the Proton acceptor in the catalytic mechanism. Residues 89-93, D143, Q185, and G212 contribute to the substrate site; that span reads DSGGF. The RNA binding stretch occupies residues 243–249; it reads GVGKPED. D262 functions as the Nucleophile in the catalytic mechanism. Positions 267–271 are RNA binding; important for wobble base 34 recognition; sequence TRNAR. Zn(2+) contacts are provided by C300, C302, C305, and H331.

The protein belongs to the queuine tRNA-ribosyltransferase family. In terms of assembly, homodimer. Within each dimer, one monomer is responsible for RNA recognition and catalysis, while the other monomer binds to the replacement base PreQ1. Zn(2+) is required as a cofactor.

It catalyses the reaction 7-aminomethyl-7-carbaguanine + guanosine(34) in tRNA = 7-aminomethyl-7-carbaguanosine(34) in tRNA + guanine. Its pathway is tRNA modification; tRNA-queuosine biosynthesis. In terms of biological role, catalyzes the base-exchange of a guanine (G) residue with the queuine precursor 7-aminomethyl-7-deazaguanine (PreQ1) at position 34 (anticodon wobble position) in tRNAs with GU(N) anticodons (tRNA-Asp, -Asn, -His and -Tyr). Catalysis occurs through a double-displacement mechanism. The nucleophile active site attacks the C1' of nucleotide 34 to detach the guanine base from the RNA, forming a covalent enzyme-RNA intermediate. The proton acceptor active site deprotonates the incoming PreQ1, allowing a nucleophilic attack on the C1' of the ribose to form the product. After dissociation, two additional enzymatic reactions on the tRNA convert PreQ1 to queuine (Q), resulting in the hypermodified nucleoside queuosine (7-(((4,5-cis-dihydroxy-2-cyclopenten-1-yl)amino)methyl)-7-deazaguanosine). This is Queuine tRNA-ribosyltransferase from Thioalkalivibrio sulfidiphilus (strain HL-EbGR7).